The primary structure comprises 324 residues: dITP/XTP pyrophosphatase (324 aa).

The unknown stretch occupies residues 1–126 (MTKSIFEYKD…SDNKSDFGDV (126 aa)). Residues 127–324 (LLIATRNEGK…EVFPAWQNKQ (198 aa)) are NTP pyrophosphatase. 131-136 (TRNEGK) provides a ligand contact to substrate. The Proton acceptor role is filled by Asp-193. Asp-193 is a binding site for Mg(2+). Substrate is bound by residues Ser-194, 277-280 (FGYD), Lys-300, and 305-306 (HR).

Belongs to the HAM1 NTPase family. In terms of assembly, homodimer. Mg(2+) is required as a cofactor.

The enzyme catalyses XTP + H2O = XMP + diphosphate + H(+). The catalysed reaction is dITP + H2O = dIMP + diphosphate + H(+). It carries out the reaction ITP + H2O = IMP + diphosphate + H(+). Pyrophosphatase that catalyzes the hydrolysis of nucleoside triphosphates to their monophosphate derivatives, with a high preference for the non-canonical purine nucleotides XTP (xanthosine triphosphate), dITP (deoxyinosine triphosphate) and ITP. Seems to function as a house-cleaning enzyme that removes non-canonical purine nucleotides from the nucleotide pool, thus preventing their incorporation into DNA/RNA and avoiding chromosomal lesions. The sequence is that of dITP/XTP pyrophosphatase from Streptococcus thermophilus (strain ATCC BAA-250 / LMG 18311).